The primary structure comprises 267 residues: Pyridoxine 5'-phosphate synthase (267 aa).

3-amino-2-oxopropyl phosphate is bound at residue N8. Residue 10-11 (DH) participates in 1-deoxy-D-xylulose 5-phosphate binding. R19 lines the 3-amino-2-oxopropyl phosphate pocket. H44 serves as the catalytic Proton acceptor. 1-deoxy-D-xylulose 5-phosphate contacts are provided by R46 and H51. The active-site Proton acceptor is E71. T101 is a binding site for 1-deoxy-D-xylulose 5-phosphate. The active-site Proton donor is the H219. Residues G220 and 241–242 (GH) contribute to the 3-amino-2-oxopropyl phosphate site.

This sequence belongs to the PNP synthase family. Homooctamer; tetramer of dimers.

Its subcellular location is the cytoplasm. It carries out the reaction 3-amino-2-oxopropyl phosphate + 1-deoxy-D-xylulose 5-phosphate = pyridoxine 5'-phosphate + phosphate + 2 H2O + H(+). It functions in the pathway cofactor biosynthesis; pyridoxine 5'-phosphate biosynthesis; pyridoxine 5'-phosphate from D-erythrose 4-phosphate: step 5/5. Its function is as follows. Catalyzes the complicated ring closure reaction between the two acyclic compounds 1-deoxy-D-xylulose-5-phosphate (DXP) and 3-amino-2-oxopropyl phosphate (1-amino-acetone-3-phosphate or AAP) to form pyridoxine 5'-phosphate (PNP) and inorganic phosphate. The chain is Pyridoxine 5'-phosphate synthase from Helicobacter hepaticus (strain ATCC 51449 / 3B1).